The chain runs to 440 residues: Tuliposide B-converting enzyme 1, amyloplastic (440 aa).

The N-terminal 58 residues, Met-1–Pro-58, are a transit peptide targeting the amyloplast. The Acyl-ester intermediate role is filled by Ser-232. Active-site charge relay system residues include Asp-325 and His-357.

The protein belongs to the AB hydrolase superfamily. As to quaternary structure, homodimer. Not glycosylated. In terms of tissue distribution, expressed in the pollen grains.

It localises to the plastid. The protein resides in the amyloplast. The enzyme catalyses 6-tuliposide B = tulipalin B + D-glucose. Its activity is regulated as follows. Inhibited by Ag(+), Cu(2+), Fe(2+), Hg(2+), V(3+) and phenylmethylsulfonyl fluoride (PMSF). Functionally, lactone-forming carboxylesterase, specifically catalyzing intramolecular transesterification, but not hydrolysis. Involved in the biosynthesis of tulipalins, defensive chemicals that show antimicrobial activities against a broad range of strains of bacteria and fungi. Substrates are 6-tuliposide B &gt; 6-tuliposide A. The polypeptide is Tuliposide B-converting enzyme 1, amyloplastic (Tulipa gesneriana (Garden tulip)).